Here is a 953-residue protein sequence, read N- to C-terminus: MSSRTGASLLLILFFFQICSVSALTNGLDASALNALKSEWTTPPDGWEGSDPCGTNWVGITCQNDRVVSISLGNLDLEGKLPADISFLSELRILDLSYNPKLSGPLPPNIGNLGKLRNLILVGCSFSGQIPESIGTLKELIYLSLNLNKFSGTIPPSIGLLSKLYWFDIADNQIEGELPVSNGTSAPGLDMLLQTKHFHFGKNKLSGNIPKELFSSNMSLIHVLFDGNQFTGEIPETLSLVKTLTVLRLDRNKLIGDIPSYLNNLTNLNELYLANNRFTGTLPNLTSLTSLYTLDVSNNTLDFSPIPSWISSLPSLSTLRMEGIQLNGPIPISFFSPPQLQTVILKRNSIVESLDFGTDVSSQLEFVDLQYNEITDYKPSANKVLQVILANNPVCLEAGNGPSYCSAIQHNTSFSTLPTNCSPCEPGMEASPTCRCAYPFMGTLYFRSPSFSGLFNSTNFSILQKAIADFFKKFNYPVDSVGVRNIRENPTDHQLLIDLLVFPLGRESFNQTGMSLVGFAFSNQTYKPPPIFGPYIFKADLYKQFSDVEVSSKSSNKSILIGAVVGVVVLLLLLTIAGIYALRQKKRAERATGQNNPFAKWDTSKSSIDAPQLMGAKAFTFEELKKCTDNFSEANDVGGGGYGKVYRGILPNGQLIAIKRAQQGSLQGGLEFKTEIELLSRVHHKNVVRLLGFCFDRNEQMLVYEYISNGSLKDSLSGKSGIRLDWTRRLKIALGSGKGLAYLHELADPPIIHRDIKSNNILLDENLTAKVADFGLSKLVGDPEKTHVTTQVKGTMGYLDPEYYMTNQLTEKSDVYGFGVVLLELLTGRSPIERGKYVVREVKTKMNKSRSLYDLQELLDTTIIASSGNLKGFEKYVDLALRCVEEEGVNRPSMGEVVKEIENIMQLAGLNPNSDSATSSRTYEDAIKGSGDPYGSESFQYSGNFPASKLEPQ.

The signal sequence occupies residues 1–23 (MSSRTGASLLLILFFFQICSVSA). Residues 24-558 (LTNGLDASAL…EVSSKSSNKS (535 aa)) lie on the Extracellular side of the membrane. LRR repeat units follow at residues 64-88 (NDRVVSISLGNLDLEGKLPADISFL), 89-113 (SELRILDLSYNPKLSGPLPPNIGNL), 115-137 (KLRNLILVGCSFSGQIPESIGTL), 138-162 (KELIYLSLNLNKFSGTIPPSIGLLS), 164-187 (LYWFDIADNQIEGELPVSNGTSAP), and 192-216 (LLQTKHFHFGKNKLSGNIPKELFSS). A glycan (N-linked (GlcNAc...) asparagine) is linked at N182. N-linked (GlcNAc...) asparagine glycosylation occurs at N217. 7 LRR repeats span residues 218 to 241 (MSLIHVLFDGNQFTGEIPETLSLV), 242 to 265 (KTLTVLRLDRNKLIGDIPSYLNNL), 266 to 290 (TNLNELYLANNRFTGTLPNLTSLTS), 292 to 311 (YTLDVSNNTLDFSPIPSWIS), 313 to 337 (LPSLSTLRMEGIQLNGPIPISFFSP), 339 to 361 (QLQTVILKRNSIVESLDFGTDVS), and 362 to 384 (SQLEFVDLQYNEITDYKPSANKV). Residues N264, N284, and N298 are each glycosylated (N-linked (GlcNAc...) asparagine). N411 carries an N-linked (GlcNAc...) asparagine glycan. Cystine bridges form between C421–C424 and C434–C436. Residues N456, N459, N510, and N523 are each glycosylated (N-linked (GlcNAc...) asparagine). Residues 559–579 (ILIGAVVGVVVLLLLLTIAGI) traverse the membrane as a helical segment. Residues 580–953 (YALRQKKRAE…NFPASKLEPQ (374 aa)) lie on the Cytoplasmic side of the membrane. Phosphoserine occurs at positions 606 and 607. The Protein kinase domain maps to 631–905 (FSEANDVGGG…EVVKEIENIM (275 aa)). ATP contacts are provided by residues 637–645 (VGGGGYGKV) and K659. The Proton acceptor role is filled by D755. Phosphothreonine occurs at positions 786, 789, and 790. The span at 912 to 921 (PNSDSATSSR) shows a compositional bias: polar residues. The interval 912-953 (PNSDSATSSRTYEDAIKGSGDPYGSESFQYSGNFPASKLEPQ) is disordered. The residue at position 942 (S942) is a Phosphoserine.

Belongs to the protein kinase superfamily. Ser/Thr protein kinase family. In terms of processing, autophosphorylated at Ser-606, Ser-607, Thr-786, Thr-789, Thr-790 and Ser-942 in response to extracellular hydrogen peroxide. As to expression, widely expressed.

The protein resides in the cell membrane. The enzyme catalyses L-seryl-[protein] + ATP = O-phospho-L-seryl-[protein] + ADP + H(+). It carries out the reaction L-threonyl-[protein] + ATP = O-phospho-L-threonyl-[protein] + ADP + H(+). With respect to regulation, activated by autophosphorylation on serine and threonine residues in response to extracellular hydrogen peroxide. Its function is as follows. Leucine-rich repeat receptor protein kinase that acts as sensor of extracellular hydrogen peroxide. Required for intracellular calcium influx in response to extracellular hydrogen peroxide. Mediates hydrogen peroxide-induced activation of calcium channels in guard cells and is required for stomatal closure. This Arabidopsis thaliana (Mouse-ear cress) protein is Leucine-rich repeat receptor protein kinase HPCA1.